A 488-amino-acid polypeptide reads, in one-letter code: Protein nucleotidyltransferase YdiU (488 aa).

Positions 91, 93, 94, 114, 126, 127, 177, and 184 each coordinate ATP. Asp253 acts as the Proton acceptor in catalysis. Positions 254 and 263 each coordinate Mg(2+). Position 263 (Asp263) interacts with ATP.

This sequence belongs to the SELO family. Mg(2+) serves as cofactor. The cofactor is Mn(2+).

The enzyme catalyses L-seryl-[protein] + ATP = 3-O-(5'-adenylyl)-L-seryl-[protein] + diphosphate. The catalysed reaction is L-threonyl-[protein] + ATP = 3-O-(5'-adenylyl)-L-threonyl-[protein] + diphosphate. It catalyses the reaction L-tyrosyl-[protein] + ATP = O-(5'-adenylyl)-L-tyrosyl-[protein] + diphosphate. It carries out the reaction L-histidyl-[protein] + UTP = N(tele)-(5'-uridylyl)-L-histidyl-[protein] + diphosphate. The enzyme catalyses L-seryl-[protein] + UTP = O-(5'-uridylyl)-L-seryl-[protein] + diphosphate. The catalysed reaction is L-tyrosyl-[protein] + UTP = O-(5'-uridylyl)-L-tyrosyl-[protein] + diphosphate. In terms of biological role, nucleotidyltransferase involved in the post-translational modification of proteins. It can catalyze the addition of adenosine monophosphate (AMP) or uridine monophosphate (UMP) to a protein, resulting in modifications known as AMPylation and UMPylation. The chain is Protein nucleotidyltransferase YdiU from Bacillus mycoides (strain KBAB4) (Bacillus weihenstephanensis).